Here is a 451-residue protein sequence, read N- to C-terminus: tRNA-2-methylthio-N(6)-dimethylallyladenosine synthase (451 aa).

Residues 6 to 122 form the MTTase N-terminal domain; that stretch reads RRYHIITFGC…LDQLLEQVWA (117 aa). C15, C51, C85, C157, C161, and C164 together coordinate [4Fe-4S] cluster. One can recognise a Radical SAM core domain in the interval 143–384; that stretch reads RESTVSAWVN…STQAMERSQR (242 aa). A TRAM domain is found at 383–447; that stretch reads QRYLGRVEEV…AFSLTGEALS (65 aa).

The protein belongs to the methylthiotransferase family. MiaB subfamily. In terms of assembly, monomer. The cofactor is [4Fe-4S] cluster.

It localises to the cytoplasm. It catalyses the reaction N(6)-dimethylallyladenosine(37) in tRNA + (sulfur carrier)-SH + AH2 + 2 S-adenosyl-L-methionine = 2-methylsulfanyl-N(6)-dimethylallyladenosine(37) in tRNA + (sulfur carrier)-H + 5'-deoxyadenosine + L-methionine + A + S-adenosyl-L-homocysteine + 2 H(+). Its function is as follows. Catalyzes the methylthiolation of N6-(dimethylallyl)adenosine (i(6)A), leading to the formation of 2-methylthio-N6-(dimethylallyl)adenosine (ms(2)i(6)A) at position 37 in tRNAs that read codons beginning with uridine. The chain is tRNA-2-methylthio-N(6)-dimethylallyladenosine synthase from Synechocystis sp. (strain ATCC 27184 / PCC 6803 / Kazusa).